The chain runs to 96 residues: Small ribosomal subunit protein bS6 (96 aa).

This sequence belongs to the bacterial ribosomal protein bS6 family.

Its function is as follows. Binds together with bS18 to 16S ribosomal RNA. In Cutibacterium acnes (strain DSM 16379 / KPA171202) (Propionibacterium acnes), this protein is Small ribosomal subunit protein bS6.